The primary structure comprises 206 residues: Uridine kinase (206 aa).

9–16 (GGSGSGKT) contributes to the ATP binding site.

This sequence belongs to the uridine kinase family.

Its subcellular location is the cytoplasm. It catalyses the reaction uridine + ATP = UMP + ADP + H(+). It carries out the reaction cytidine + ATP = CMP + ADP + H(+). It participates in pyrimidine metabolism; CTP biosynthesis via salvage pathway; CTP from cytidine: step 1/3. It functions in the pathway pyrimidine metabolism; UMP biosynthesis via salvage pathway; UMP from uridine: step 1/1. The polypeptide is Uridine kinase (Borrelia garinii subsp. bavariensis (strain ATCC BAA-2496 / DSM 23469 / PBi) (Borreliella bavariensis)).